The following is a 172-amino-acid chain: Ribosome maturation factor RimM (172 aa).

The region spanning 96–168 (EGEFYYHQII…RVDVELMEGL (73 aa)) is the PRC barrel domain.

This sequence belongs to the RimM family. Binds ribosomal protein uS19.

The protein resides in the cytoplasm. An accessory protein needed during the final step in the assembly of 30S ribosomal subunit, possibly for assembly of the head region. Essential for efficient processing of 16S rRNA. May be needed both before and after RbfA during the maturation of 16S rRNA. It has affinity for free ribosomal 30S subunits but not for 70S ribosomes. The sequence is that of Ribosome maturation factor RimM from Streptococcus pyogenes serotype M1.